Reading from the N-terminus, the 298-residue chain is N-acetylmuramic acid 6-phosphate etherase (298 aa).

The 164-residue stretch at 57-220 (IAAAFGKGGR…STGAMIRTGK (164 aa)) folds into the SIS domain. E85 serves as the catalytic Proton donor. Residue E116 is part of the active site.

This sequence belongs to the GCKR-like family. MurNAc-6-P etherase subfamily. As to quaternary structure, homodimer.

It catalyses the reaction N-acetyl-D-muramate 6-phosphate + H2O = N-acetyl-D-glucosamine 6-phosphate + (R)-lactate. It functions in the pathway amino-sugar metabolism; 1,6-anhydro-N-acetylmuramate degradation. Its pathway is amino-sugar metabolism; N-acetylmuramate degradation. It participates in cell wall biogenesis; peptidoglycan recycling. In terms of biological role, specifically catalyzes the cleavage of the D-lactyl ether substituent of MurNAc 6-phosphate, producing GlcNAc 6-phosphate and D-lactate. Together with AnmK, is also required for the utilization of anhydro-N-acetylmuramic acid (anhMurNAc) either imported from the medium or derived from its own cell wall murein, and thus plays a role in cell wall recycling. This Aeromonas hydrophila subsp. hydrophila (strain ATCC 7966 / DSM 30187 / BCRC 13018 / CCUG 14551 / JCM 1027 / KCTC 2358 / NCIMB 9240 / NCTC 8049) protein is N-acetylmuramic acid 6-phosphate etherase.